Consider the following 425-residue polypeptide: Probable mitochondrial import inner membrane translocase subunit tin-44 (425 aa).

Residues 38 to 149 adopt a coiled-coil conformation; it reads FLNNLIDNVR…EHVEKVAEKV (112 aa).

It belongs to the Tim44 family. Probable component of the PAM complex at least composed of a mitochondrial HSP70 protein, GrpE, tin-44, tim-16 and tim-14/dnj-21. The complex interacts with the tim-23 component of the TIM23 complex.

It localises to the mitochondrion inner membrane. Functionally, essential component of the PAM complex, a complex required for the translocation of transit peptide-containing proteins from the inner membrane into the mitochondrial matrix in an ATP-dependent manner. Recruits mitochondrial HSP70 to drive protein translocation into the matrix using ATP as an energy source. The protein is Probable mitochondrial import inner membrane translocase subunit tin-44 of Caenorhabditis elegans.